A 322-amino-acid chain; its full sequence is Arginase-1 (322 aa).

Residues 1–27 (MSSKPQSIGVIGAPFSKGQPRGGVEEG) form a disordered region. Position 7 is a phosphoserine (Ser7). Lys17 is modified (N6-succinyllysine). Phosphoserine is present on Ser62. N6-succinyllysine is present on Lys75. Residues His101, Asp124, His126, and Asp128 each coordinate Mn(2+). Residues 126–130 (HTDIN), 137–139 (TGN), and Asp183 contribute to the substrate site. Ser217 carries the post-translational modification Phosphoserine. Positions 232 and 234 each coordinate Mn(2+). Thr246 and Glu277 together coordinate substrate.

Belongs to the arginase family. As to quaternary structure, homotrimer. Interacts with CMTM6. Mn(2+) serves as cofactor.

The protein localises to the cytoplasm. The catalysed reaction is L-arginine + H2O = urea + L-ornithine. Its pathway is nitrogen metabolism; urea cycle; L-ornithine and urea from L-arginine: step 1/1. This chain is Arginase-1 (ARG1), found in Bos taurus (Bovine).